A 308-amino-acid chain; its full sequence is Eugenol synthase 1 (308 aa).

NADP(+) contacts are provided by residues 13 to 16 (TGYI), 35 to 45 (VRESTVSDPAK), R36, 86 to 88 (QMQ), 111 to 113 (SEF), K133, and 153 to 155 (NCF). The active-site Proton donor/acceptor is K133.

This sequence belongs to the NmrA-type oxidoreductase family. As to expression, in flowers, mostly expressed in limbs, and, to a lower extent, in tubes.

The enzyme catalyses eugenol + a carboxylate + NADP(+) = a coniferyl ester + NADPH. It carries out the reaction eugenol + acetate + NADP(+) = (E)-coniferyl acetate + NADPH. The protein operates within aromatic compound metabolism; phenylpropanoid biosynthesis. Functionally, involved in the biosynthesis of the floral volatile eugenol. Catalyzes the synthesis of the phenylpropene eugenol from coniferyl acetate. Phenylpropenes are produced by plants as defense compounds with antimicrobial and antianimal properties, or as floral attractants of pollinators. In Petunia hybrida (Petunia), this protein is Eugenol synthase 1.